The primary structure comprises 142 residues: Hemoglobin subunit alpha (142 aa).

One can recognise a Globin domain in the interval Val-2–Arg-142. Ser-4 carries the post-translational modification Phosphoserine. N6-succinyllysine occurs at positions 8 and 12. Lys-17 carries the post-translational modification N6-acetyllysine; alternate. Lys-17 is modified (N6-succinyllysine; alternate). Phosphotyrosine is present on Tyr-25. The residue at position 36 (Ser-36) is a Phosphoserine. Residue Lys-41 is modified to N6-succinyllysine. Ser-50 is subject to Phosphoserine. An O2-binding site is contributed by His-59. Residue His-88 participates in heme b binding. Ser-103 carries the post-translational modification Phosphoserine. Position 109 is a phosphothreonine (Thr-109). Phosphoserine is present on residues Ser-125 and Ser-132. Phosphothreonine occurs at positions 135 and 138. Phosphoserine is present on Ser-139.

The protein belongs to the globin family. In terms of assembly, heterotetramer of two alpha chains and two beta chains. As to expression, red blood cells.

Involved in oxygen transport from the lung to the various peripheral tissues. Functionally, hemopressin acts as an antagonist peptide of the cannabinoid receptor CNR1. Hemopressin-binding efficiently blocks cannabinoid receptor CNR1 and subsequent signaling. This is Hemoglobin subunit alpha (HBA) from Macaca fuscata fuscata (Japanese macaque).